Consider the following 250-residue polypeptide: Ubiquinone/menaquinone biosynthesis C-methyltransferase UbiE (250 aa).

Residues Thr-74, Asp-94, 122-123 (DA), and Ser-139 contribute to the S-adenosyl-L-methionine site.

It belongs to the class I-like SAM-binding methyltransferase superfamily. MenG/UbiE family.

It carries out the reaction a 2-demethylmenaquinol + S-adenosyl-L-methionine = a menaquinol + S-adenosyl-L-homocysteine + H(+). It catalyses the reaction a 2-methoxy-6-(all-trans-polyprenyl)benzene-1,4-diol + S-adenosyl-L-methionine = a 5-methoxy-2-methyl-3-(all-trans-polyprenyl)benzene-1,4-diol + S-adenosyl-L-homocysteine + H(+). It functions in the pathway quinol/quinone metabolism; menaquinone biosynthesis; menaquinol from 1,4-dihydroxy-2-naphthoate: step 2/2. Its pathway is cofactor biosynthesis; ubiquinone biosynthesis. Its function is as follows. Methyltransferase required for the conversion of demethylmenaquinol (DMKH2) to menaquinol (MKH2) and the conversion of 2-polyprenyl-6-methoxy-1,4-benzoquinol (DDMQH2) to 2-polyprenyl-3-methyl-6-methoxy-1,4-benzoquinol (DMQH2). In Roseobacter denitrificans (strain ATCC 33942 / OCh 114) (Erythrobacter sp. (strain OCh 114)), this protein is Ubiquinone/menaquinone biosynthesis C-methyltransferase UbiE.